The sequence spans 60 residues: Small ribosomal subunit protein bS21 (60 aa).

Residues 38 to 60 (KGVKRREKEKAARKRLQKKHRMY) form a disordered region.

It belongs to the bacterial ribosomal protein bS21 family.

In Mycoplasmoides gallisepticum (strain R(low / passage 15 / clone 2)) (Mycoplasma gallisepticum), this protein is Small ribosomal subunit protein bS21.